Consider the following 105-residue polypeptide: Ig lambda-1 chain C region (105 aa).

The Ig-like domain occupies 6–100 (PSVTLFPPSS…EGHTVEKSLS (95 aa)). Residues C27 and C86 are joined by a disulfide bond.

This chain is Ig lambda-1 chain C region, found in Mus musculus (Mouse).